A 755-amino-acid polypeptide reads, in one-letter code: MKNLISIILLILIFFNYSKFVKSKNCKIAVLLSGDFSDLGYNYQFNEARVKAESILKLSDFSLYYKNLDESEELSEASFKDAIAQGANLIVVASSGQTEMGLKYAKLYKDSDIYWIIKTSARPVDYLPKVAVLDFNTDRAHFTLGYFAGKMSKTGVVGFVSPGAYIASNGNAFYLGAKEARSNITFVTTFTGSWFNPEVAYKAAEMLISNGADFLGMSQDDMSVQKAVIDSGSLGLGVTGYPTRLIYGSANIGLSYITDWTDVFVKYASHVINDTWPDSDYYKTSLNPGGSLLFDEYSYLVPQSIRDLVNNEIEILKNDDFNPFRCNPMYIDLGYKLDVNGCISYNEFEKNQQVLKGDKYSKTISFGTYTIPIEFVDYSSSMKLGITITSSICIFLCIISIIIVLVFRTARIIKSASPAFLFLILMGCILIFIGCIIFSQSPNEGTCRARVWLLSIGYTIFLGSLLVKNWRIWLLFDNPKLKKRSITNWKLYPWVAGILAADVLILAFWQGLGNIRSESRIGIDSLTKYQYTNVCSSNDQGSIALYILLVFHGIKLLVACFISFKIKVVDIDEFNESKPIASSVYIITFCLFIVIPLMVSPQSVTSQVTTICVCAIVTTLISIILLFGSKFYKMITQGAALNQTFASSSKSSSFSQSLEKKKTGEEDDSESSEENGKKAIVVTQQSVLAHFSSDTEDDENETQQIDEEKDEQIAGSNEDIIQPEENIEENNVSVIQSKRLSNQLNGEVEIDSNNL.

An N-terminal signal peptide occupies residues 1 to 23 (MKNLISIILLILIFFNYSKFVKS). N-linked (GlcNAc...) asparagine glycosylation is found at Asn-16, Asn-183, and Asn-273. At 24–385 (KNCKIAVLLS…VDYSSSMKLG (362 aa)) the chain is on the extracellular side. A helical transmembrane segment spans residues 386-406 (ITITSSICIFLCIISIIIVLV). The Cytoplasmic segment spans residues 407-417 (FRTARIIKSAS). Residues 418-438 (PAFLFLILMGCILIFIGCIIF) traverse the membrane as a helical segment. At 439 to 455 (SQSPNEGTCRARVWLLS) the chain is on the extracellular side. Residues 456–476 (IGYTIFLGSLLVKNWRIWLLF) traverse the membrane as a helical segment. At 477–492 (DNPKLKKRSITNWKLY) the chain is on the cytoplasmic side. Residues 493–513 (PWVAGILAADVLILAFWQGLG) form a helical membrane-spanning segment. The Extracellular portion of the chain corresponds to 514 to 541 (NIRSESRIGIDSLTKYQYTNVCSSNDQG). Residues 542–562 (SIALYILLVFHGIKLLVACFI) traverse the membrane as a helical segment. Over 563–578 (SFKIKVVDIDEFNESK) the chain is Cytoplasmic. A helical transmembrane segment spans residues 579–599 (PIASSVYIITFCLFIVIPLMV). The Extracellular segment spans residues 600-607 (SPQSVTSQ). Residues 608–628 (VTTICVCAIVTTLISIILLFG) form a helical membrane-spanning segment. The Cytoplasmic portion of the chain corresponds to 629 to 755 (SKFYKMITQG…GEVEIDSNNL (127 aa)). 2 disordered regions span residues 656-676 (QSLE…EENG) and 691-729 (FSSD…NIEE). A compositionally biased stretch (acidic residues) spans 694–710 (DTEDDENETQQIDEEKD).

It in the N-terminal section; belongs to the BMP lipoprotein family. This sequence in the C-terminal section; belongs to the G-protein coupled receptor 3 family. GABA-B receptor subfamily.

Its subcellular location is the membrane. The polypeptide is Metabotropic glutamate receptor-like protein B (grlB) (Dictyostelium discoideum (Social amoeba)).